The sequence spans 264 residues: Probable glycerophosphodiester phosphodiesterase 2 (264 aa).

The GP-PDE domain occupies Arg17–Leu255. His22 (proton acceptor) is an active-site residue. Glu50, Asp52, and His65 together coordinate a divalent metal cation. The active-site Proton donor is the His65.

It belongs to the glycerophosphoryl diester phosphodiesterase family. A divalent metal cation is required as a cofactor.

The enzyme catalyses a sn-glycero-3-phosphodiester + H2O = an alcohol + sn-glycerol 3-phosphate + H(+). In terms of biological role, glycerophosphodiester phosphodiesterase hydrolyzes glycerophosphodiesters into glycerol-3-phosphate (G3P) and the corresponding alcohol. The sequence is that of Probable glycerophosphodiester phosphodiesterase 2 from Mycobacterium tuberculosis (strain ATCC 25618 / H37Rv).